Here is a 322-residue protein sequence, read N- to C-terminus: MSQLYDITIVGGGPVGLFAAFYAHLRQAKVQIIDSLPQLGGQPAILYPEKEILDVPGFPNLTGEELTNRLIEQLNGFDTPIHLNETVLEIDKQEEEFAITTSKGSHLTKTVIIAMGGGAFKPRPLELEGVEDYENIHYHVSNIQQYAGKKVTILGGGDSAVDWALAFEKIAPTTLVHRRDNFRALEHSVQALQESSVTIKTPFAPSQLLGDGKTLDKLEITKVKSDETETIDLDHLFVNYGFKSSVGNLKNWGLDLNRHKIIVNSKQESSQAGIYAIGDCCYYDGKIDLIATGLGEAPTAVNNAINYIDPEQKVQPKHSTSL.

Residues Asp-34, Gln-42, Tyr-47, Val-87, Phe-120, Asp-279, and Thr-320 each contribute to the FAD site.

It belongs to the ferredoxin--NADP reductase type 2 family. As to quaternary structure, homodimer. Requires FAD as cofactor.

The enzyme catalyses 2 reduced [2Fe-2S]-[ferredoxin] + NADP(+) + H(+) = 2 oxidized [2Fe-2S]-[ferredoxin] + NADPH. The protein is Ferredoxin--NADP reductase of Streptococcus pneumoniae serotype 2 (strain D39 / NCTC 7466).